Here is a 215-residue protein sequence, read N- to C-terminus: Golgi-associated RAB2 interactor protein 5A (215 aa).

2 disordered regions span residues 1 to 20 (MKRG…AGPG) and 174 to 215 (QDYS…LWGL). The segment covering 178–191 (ALEDDEDDDEDEDR) has biased composition (acidic residues).

The protein belongs to the GARIN family. Interacts (via N-terminus) with RAB2B (in GTP-bound form).

It is found in the golgi apparatus. Its function is as follows. RAB2B effector protein which promotes cytosolic DNA-induced innate immune responses. Regulates IFN responses against DNA viruses by regulating the CGAS-STING signaling axis. The protein is Golgi-associated RAB2 interactor protein 5A (GARIN5A) of Bos taurus (Bovine).